The sequence spans 109 residues: uncharacterized protein (109 aa).

Helical transmembrane passes span 7–27 (IITI…PFFV), 37–57 (YIRY…VVYC), and 63–83 (ILTG…LGLH).

Belongs to the AzlD/HI_1737/HP1330 family.

It localises to the cell membrane. This is an uncharacterized protein from Haemophilus influenzae (strain ATCC 51907 / DSM 11121 / KW20 / Rd).